The chain runs to 1331 residues: MPPRKKPKSSALKSNKQSSANHSSQPSTFGIQQLFLRHIQNSQSTSNSHTSTADPVDQQNVNGLASDTAVLTPQNPLGTSNEKPDESKDMDQQLTEASPKISKNLKRFSPGMLIKQSQDDCGGEITWKISPVNERLRAAAKNIPKMMDLTENSLGVKSSTIRPCSLNKLVQKQCPTSGITSKVEQWLSSPSKKASKRPAFATNRVMERVNPSPDAEFEIVNTSSSGNSPFQTPPSLSCPHNKLPCTVTCSGACGSMGAGQHKKALLELLDQVEDVIAVDDKTTDDVGIVMPQARVKDDIISSVVDCAVDEGPVSLPKMQNSINPDSYFLVLEVSEKRGSGSSSKGQCPYKVLRLLDEHTGVECALYLWDEWFYSTVSPGDSINVIGEFDGDGKCDVDRQNNFLIVHPDTLVAGTRVAASFGCPRRTVLDERLRSNEHATVALLGTLQHQVFQAGLSQESPSVDGLQEYASTVIEKSIESLYACGVHEGDVRSTLFKAIPKMLNWIEHFRYSKDSEVSKVDFGSTIGKKAVKVSEVIDIEEMSWAPKYGLKGMIDASVRVIVESDMNTVNEKIMPLEFKSGKAPSGQSSIEHSAQVILYTLLMSERYLKHIDNGLLYYLQSDQTQGISVQRSDLVGLIIRRNELANDILVASTTQQLPPMLRNPNICRNCRHLDVCTIYHKADGGNTESSGLGDVFDTHVSHLSTLHFNFLRHWDRLIDLEGREMQLLRKDIAHPHGSKGSHSASYLSSMVLDVTNGFQHHNSHKETRFIYRFVRQKSSESRERVTSEDMIRTGNLATDDLDCKLRTGDRVILRTEVSHLTVANGIIADISRTHISVSLSKRLRLPWSEPSSEVSNLSHELWRIYKDEFMTSFSVMRFNLMQLFVQNGHNIRKMIVDLEPPRFDNGSILSQDPAISYIWSEKSLNNDQRQAILKILTAKDYALILGMPGTGKTSTMVHAVKALLIRGSSILLASYTNSAVDNLLIKLKAQGIEFLRIGRDEAVHEEVRESCFSAMNMCSVEDIKKKLDQVKVVASTCLGINSPLLVNRRFDVCIIDEAGQIALPVSIGPLLFASTFVLVGDHYQLPPLVQSTEARENGMGISLFRRLSEAHPQAISVLQNQYRMCRGIMELSNALIYGDRLCCGSAEVADATLVLSTSSSTSPWLKKVLEPTRTVVFVNTDMLRAFEARDQNAINNPVEASIIAEIVEELVNNGVDSKDIGIITPYNSQASLIQHAIPTTPVEIHTIDKYQGRDKDCILVSFVRSREKPRSSASSLLGDWHRINVALTRAKKKLIMVGSQRTLSRVPLLMLLLNKVKEQSGILNLLPGDLKP.

Residues 1–98 (MPPRKKPKSS…DMDQQLTEAS (98 aa)) form a disordered region. Residues 2–8 (PPRKKPK) carry the Nuclear localization signal motif. Polar residues predominate over residues 11–31 (ALKSNKQSSANHSSQPSTFGI). Low complexity predominate over residues 40-52 (QNSQSTSNSHTST). Residues 57-81 (DQQNVNGLASDTAVLTPQNPLGTSN) show a composition bias toward polar residues. Residues 82 to 91 (EKPDESKDMD) show a composition bias toward basic and acidic residues. A nuclease activity region spans residues 362-811 (ECALYLWDEW…CKLRTGDRVI (450 aa)). Residues Cys-422, Cys-666, Cys-669, and Cys-675 each contribute to the [4Fe-4S] cluster site. The tract at residues 812–1331 (LRTEVSHLTV…LNLLPGDLKP (520 aa)) is helicase activity. Positions 924 to 1271 (NNDQRQAILK…VRSREKPRSS (348 aa)) constitute a UvrD-like helicase ATP-binding domain. 945 to 952 (GMPGTGKT) serves as a coordination point for ATP.

It belongs to the DNA2/NAM7 helicase family. [4Fe-4S] cluster serves as cofactor. Strongly expressed in meristems, including both root and shoot apical meristems (RAM and SAM). Also present in the vasculature and in young floral tissues.

The protein resides in the nucleus. The protein localises to the chromosome. The catalysed reaction is ATP + H2O = ADP + phosphate + H(+). Essential protein required during embryogenesis. Key enzyme involved in DNA replication and damage repair, shoot apical meristem (SAM) maintenance, and development. Involved in Okazaki fragments processing. Possesses different enzymatic activities, such as single-stranded DNA (ssDNA)-dependent ATPase, 5'-3' helicase and endonuclease activities. While the ATPase and endonuclease activities are well-defined and play a key role in Okazaki fragments processing and DSB repair, the 5'-3' DNA helicase activity is atypical: it cannot load onto its tracking strand internally and has an absolute free 5'-end requirement. In Arabidopsis thaliana (Mouse-ear cress), this protein is DNA replication ATP-dependent helicase/nuclease JHS1.